The primary structure comprises 299 residues: Aspartate carbamoyltransferase catalytic subunit (299 aa).

Carbamoyl phosphate contacts are provided by arginine 51 and threonine 52. Lysine 80 provides a ligand contact to L-aspartate. Carbamoyl phosphate is bound by residues arginine 101, histidine 129, and glutamine 132. 2 residues coordinate L-aspartate: arginine 162 and arginine 221. Residues leucine 260 and proline 261 each coordinate carbamoyl phosphate.

It belongs to the aspartate/ornithine carbamoyltransferase superfamily. ATCase family. As to quaternary structure, heterooligomer of catalytic and regulatory chains.

It carries out the reaction carbamoyl phosphate + L-aspartate = N-carbamoyl-L-aspartate + phosphate + H(+). Its pathway is pyrimidine metabolism; UMP biosynthesis via de novo pathway; (S)-dihydroorotate from bicarbonate: step 2/3. Catalyzes the condensation of carbamoyl phosphate and aspartate to form carbamoyl aspartate and inorganic phosphate, the committed step in the de novo pyrimidine nucleotide biosynthesis pathway. The protein is Aspartate carbamoyltransferase catalytic subunit of Sulfolobus acidocaldarius (strain ATCC 33909 / DSM 639 / JCM 8929 / NBRC 15157 / NCIMB 11770).